The primary structure comprises 210 residues: Uridine kinase (210 aa).

14–21 (GGSGSGKT) is an ATP binding site.

This sequence belongs to the uridine kinase family.

It is found in the cytoplasm. It carries out the reaction uridine + ATP = UMP + ADP + H(+). The enzyme catalyses cytidine + ATP = CMP + ADP + H(+). It participates in pyrimidine metabolism; CTP biosynthesis via salvage pathway; CTP from cytidine: step 1/3. It functions in the pathway pyrimidine metabolism; UMP biosynthesis via salvage pathway; UMP from uridine: step 1/1. This chain is Uridine kinase, found in Deinococcus radiodurans (strain ATCC 13939 / DSM 20539 / JCM 16871 / CCUG 27074 / LMG 4051 / NBRC 15346 / NCIMB 9279 / VKM B-1422 / R1).